We begin with the raw amino-acid sequence, 357 residues long: Phenylalanine--tRNA ligase alpha subunit (357 aa).

E257 is a Mg(2+) binding site.

The protein belongs to the class-II aminoacyl-tRNA synthetase family. Phe-tRNA synthetase alpha subunit type 1 subfamily. In terms of assembly, tetramer of two alpha and two beta subunits. Requires Mg(2+) as cofactor.

The protein localises to the cytoplasm. The enzyme catalyses tRNA(Phe) + L-phenylalanine + ATP = L-phenylalanyl-tRNA(Phe) + AMP + diphosphate + H(+). The polypeptide is Phenylalanine--tRNA ligase alpha subunit (Roseobacter denitrificans (strain ATCC 33942 / OCh 114) (Erythrobacter sp. (strain OCh 114))).